Reading from the N-terminus, the 513-residue chain is Probable cytosol aminopeptidase (513 aa).

Mn(2+)-binding residues include Lys-277 and Asp-282. Residue Lys-289 is part of the active site. 3 residues coordinate Mn(2+): Asp-300, Asp-359, and Glu-361. Arg-363 is an active-site residue.

It belongs to the peptidase M17 family. Requires Mn(2+) as cofactor.

It is found in the cytoplasm. It carries out the reaction Release of an N-terminal amino acid, Xaa-|-Yaa-, in which Xaa is preferably Leu, but may be other amino acids including Pro although not Arg or Lys, and Yaa may be Pro. Amino acid amides and methyl esters are also readily hydrolyzed, but rates on arylamides are exceedingly low.. It catalyses the reaction Release of an N-terminal amino acid, preferentially leucine, but not glutamic or aspartic acids.. In terms of biological role, presumably involved in the processing and regular turnover of intracellular proteins. Catalyzes the removal of unsubstituted N-terminal amino acids from various peptides. This Mycobacterium sp. (strain KMS) protein is Probable cytosol aminopeptidase.